A 129-amino-acid polypeptide reads, in one-letter code: Phosphoribosyl-AMP cyclohydrolase (129 aa).

D85 is a binding site for Mg(2+). C86 contacts Zn(2+). Mg(2+)-binding residues include D87 and D89. Zn(2+)-binding residues include C102 and C109.

Belongs to the PRA-CH family. In terms of assembly, homodimer. Requires Mg(2+) as cofactor. Zn(2+) serves as cofactor.

Its subcellular location is the cytoplasm. The catalysed reaction is 1-(5-phospho-beta-D-ribosyl)-5'-AMP + H2O = 1-(5-phospho-beta-D-ribosyl)-5-[(5-phospho-beta-D-ribosylamino)methylideneamino]imidazole-4-carboxamide. It participates in amino-acid biosynthesis; L-histidine biosynthesis; L-histidine from 5-phospho-alpha-D-ribose 1-diphosphate: step 3/9. In terms of biological role, catalyzes the hydrolysis of the adenine ring of phosphoribosyl-AMP. The chain is Phosphoribosyl-AMP cyclohydrolase from Methanococcus maripaludis (strain C6 / ATCC BAA-1332).